Reading from the N-terminus, the 476-residue chain is Ubiquinone biosynthesis monooxygenase COQ6, mitochondrial (476 aa).

The transit peptide at Met-1 to Trp-35 directs the protein to the mitochondrion. Lys-219 is modified (N6-succinyllysine).

This sequence belongs to the UbiH/COQ6 family. Component of a multi-subunit COQ enzyme complex, composed of at least COQ3, COQ4, COQ5, COQ6, COQ7 and COQ9. Interacts with COQ8B and COQ7. The cofactor is FAD. In terms of tissue distribution, expressed in the kidney, in podocytes.

It localises to the mitochondrion inner membrane. The protein localises to the golgi apparatus. Its subcellular location is the cell projection. The enzyme catalyses 4-hydroxy-3-(all-trans-decaprenyl)benzoate + 2 reduced [2Fe-2S]-[ferredoxin] + O2 + 2 H(+) = 3,4-dihydroxy-5-(all-trans-decaprenyl)benzoate + 2 oxidized [2Fe-2S]-[ferredoxin] + H2O. It catalyses the reaction 2-methoxy-6-(all-trans-decaprenyl)phenol + 2 reduced [2Fe-2S]-[ferredoxin] + O2 + 2 H(+) = 2-methoxy-6-(all-trans-decaprenyl)benzene-1,4-diol + 2 oxidized [2Fe-2S]-[ferredoxin] + H2O. It functions in the pathway cofactor biosynthesis; ubiquinone biosynthesis. FAD-dependent monooxygenase required for two non-consecutive steps during ubiquinone biosynthesis. Required for the C5-ring hydroxylation during ubiquinone biosynthesis by catalyzing the hydroxylation of 4-hydroxy-3-(all-trans-decaprenyl)benzoic acid to 3,4-dihydroxy-5-(all-trans-decaprenyl)benzoic acid. Also acts downstream of COQ4, for the C1-hydroxylation during ubiquinone biosynthesis by catalyzing the hydroxylation of 2-methoxy-6-(all-trans-decaprenyl)phenol to 2-methoxy-6-(all-trans-decaprenyl)benzene-1,4-diol. The electrons required for the hydroxylation reaction are funneled indirectly to COQ6 from NADPH via a ferredoxin/ferredoxin reductase system composed of FDX2 and FDXR. This chain is Ubiquinone biosynthesis monooxygenase COQ6, mitochondrial, found in Mus musculus (Mouse).